Consider the following 181-residue polypeptide: ATP-dependent protease subunit HslV (181 aa).

Residue Thr-6 is part of the active site. The Na(+) site is built by Ala-162, Cys-165, and Thr-168.

The protein belongs to the peptidase T1B family. HslV subfamily. As to quaternary structure, a double ring-shaped homohexamer of HslV is capped on each side by a ring-shaped HslU homohexamer. The assembly of the HslU/HslV complex is dependent on binding of ATP.

It localises to the cytoplasm. The catalysed reaction is ATP-dependent cleavage of peptide bonds with broad specificity.. Allosterically activated by HslU binding. Its function is as follows. Protease subunit of a proteasome-like degradation complex believed to be a general protein degrading machinery. This Solidesulfovibrio magneticus (strain ATCC 700980 / DSM 13731 / RS-1) (Desulfovibrio magneticus) protein is ATP-dependent protease subunit HslV.